A 219-amino-acid chain; its full sequence is Holliday junction branch migration complex subunit RuvA (219 aa).

The tract at residues 1 to 66 is domain I; sequence MIEYIIGKIS…NFLFEYYGFK (66 aa). The domain II stretch occupies residues 67 to 148; it reads TLREKIFFEN…SEYNNDVNHS (82 aa). The segment at 149–154 is flexible linker; the sequence is SINQQS. A domain III region spans residues 155–219; it reads NSYNPVPDLV…EAVTNKTTVS (65 aa).

This sequence belongs to the RuvA family. In terms of assembly, homotetramer. Forms an RuvA(8)-RuvB(12)-Holliday junction (HJ) complex. HJ DNA is sandwiched between 2 RuvA tetramers; dsDNA enters through RuvA and exits via RuvB. An RuvB hexamer assembles on each DNA strand where it exits the tetramer. Each RuvB hexamer is contacted by two RuvA subunits (via domain III) on 2 adjacent RuvB subunits; this complex drives branch migration. In the full resolvosome a probable DNA-RuvA(4)-RuvB(12)-RuvC(2) complex forms which resolves the HJ.

Its subcellular location is the cytoplasm. The RuvA-RuvB-RuvC complex processes Holliday junction (HJ) DNA during genetic recombination and DNA repair, while the RuvA-RuvB complex plays an important role in the rescue of blocked DNA replication forks via replication fork reversal (RFR). RuvA specifically binds to HJ cruciform DNA, conferring on it an open structure. The RuvB hexamer acts as an ATP-dependent pump, pulling dsDNA into and through the RuvAB complex. HJ branch migration allows RuvC to scan DNA until it finds its consensus sequence, where it cleaves and resolves the cruciform DNA. This Malacoplasma penetrans (strain HF-2) (Mycoplasma penetrans) protein is Holliday junction branch migration complex subunit RuvA.